The following is a 571-amino-acid chain: Phosphoenolpyruvate-protein phosphotransferase (571 aa).

The Tele-phosphohistidine intermediate role is filled by histidine 189. Residues arginine 296 and arginine 332 each contribute to the phosphoenolpyruvate site. Residues glutamate 431 and aspartate 455 each contribute to the Mg(2+) site. Residues 454–455 (ND) and arginine 465 contribute to the phosphoenolpyruvate site. The Proton donor role is filled by cysteine 502.

This sequence belongs to the PEP-utilizing enzyme family. In terms of assembly, homodimer. Mg(2+) is required as a cofactor.

Its subcellular location is the cytoplasm. It carries out the reaction L-histidyl-[protein] + phosphoenolpyruvate = N(pros)-phospho-L-histidyl-[protein] + pyruvate. Its function is as follows. General (non sugar-specific) component of the phosphoenolpyruvate-dependent sugar phosphotransferase system (sugar PTS). This major carbohydrate active-transport system catalyzes the phosphorylation of incoming sugar substrates concomitantly with their translocation across the cell membrane. Enzyme I transfers the phosphoryl group from phosphoenolpyruvate (PEP) to the phosphoryl carrier protein (HPr). The chain is Phosphoenolpyruvate-protein phosphotransferase (ptsI) from Buchnera aphidicola subsp. Acyrthosiphon pisum (strain APS) (Acyrthosiphon pisum symbiotic bacterium).